A 261-amino-acid chain; its full sequence is Fructoselysine 6-kinase (261 aa).

This sequence belongs to the carbohydrate kinase PfkB family. In terms of assembly, monomer.

It carries out the reaction N(6)-(D-fructosyl)-L-lysine + ATP = N(6)-(6-phospho-D-fructosyl)-L-lysine + ADP + H(+). The protein operates within carbohydrate metabolism; fructoselysine degradation; D-glucose 6-phosphate and lysine from fructoselysine: step 1/2. Its function is as follows. Catalyzes the ATP-dependent phosphorylation of fructoselysine to fructoselysine 6-phosphate. Functions in a fructoselysine degradation pathway that allows E.coli to grow on fructoselysine or psicoselysine. To a much lesser extenst, is also able to phosphorylate psicoselysine. This Escherichia coli (strain K12) protein is Fructoselysine 6-kinase.